The sequence spans 172 residues: DCC family protein At1g52590, chloroplastic (172 aa).

A chloroplast-targeting transit peptide spans 1–25 (MAILIPASFGRLTITSRAQVRVRVS).

It belongs to the DCC thiol-disulfide oxidoreductase family.

The protein resides in the plastid. Its subcellular location is the chloroplast. The chain is DCC family protein At1g52590, chloroplastic from Arabidopsis thaliana (Mouse-ear cress).